The primary structure comprises 608 residues: Glutamine--fructose-6-phosphate aminotransferase [isomerizing] (608 aa).

Cys-2 functions as the Nucleophile; for GATase activity in the catalytic mechanism. The region spanning 2-217 is the Glutamine amidotransferase type-2 domain; the sequence is CGIVGIVGTQ…DGDCAIVTRD (216 aa). SIS domains are found at residues 281-422 and 456-598; these read ADKA…ARGT and LSRD…VDQP. Catalysis depends on Lys-603, which acts as the For Fru-6P isomerization activity.

In terms of assembly, homodimer.

It localises to the cytoplasm. It catalyses the reaction D-fructose 6-phosphate + L-glutamine = D-glucosamine 6-phosphate + L-glutamate. Its function is as follows. Catalyzes the first step in hexosamine metabolism, converting fructose-6P into glucosamine-6P using glutamine as a nitrogen source. The sequence is that of Glutamine--fructose-6-phosphate aminotransferase [isomerizing] from Agrobacterium fabrum (strain C58 / ATCC 33970) (Agrobacterium tumefaciens (strain C58)).